The following is a 416-amino-acid chain: Probable glucan 1,3-beta-glucosidase A (416 aa).

An N-terminal signal peptide occupies residues 1–21 (MLYNLSKAVLALSVLAASADA). Residue Glu209 is the Proton donor of the active site. Intrachain disulfides connect Cys290–Cys415 and Cys316–Cys341. The active-site Nucleophile is the Glu308.

This sequence belongs to the glycosyl hydrolase 5 (cellulase A) family. Monomer. It depends on Mn(2+) as a cofactor.

Its subcellular location is the secreted. It catalyses the reaction Successive hydrolysis of beta-D-glucose units from the non-reducing ends of (1-&gt;3)-beta-D-glucans, releasing alpha-glucose.. Its function is as follows. Beta-glucanases participate in the metabolism of beta-glucan, the main structural component of the cell wall. It could also function biosynthetically as a transglycosylase. This Aspergillus terreus (strain NIH 2624 / FGSC A1156) protein is Probable glucan 1,3-beta-glucosidase A (exgA).